Reading from the N-terminus, the 341-residue chain is D-erythrose-4-phosphate dehydrogenase (341 aa).

14–15 (RI) contacts NAD(+). Substrate contacts are provided by residues 156–158 (SCT), arginine 202, 215–216 (TR), and arginine 238. Cysteine 157 functions as the Nucleophile in the catalytic mechanism. Asparagine 320 lines the NAD(+) pocket.

Belongs to the glyceraldehyde-3-phosphate dehydrogenase family. Epd subfamily. Homotetramer.

It is found in the cytoplasm. It carries out the reaction D-erythrose 4-phosphate + NAD(+) + H2O = 4-phospho-D-erythronate + NADH + 2 H(+). It functions in the pathway cofactor biosynthesis; pyridoxine 5'-phosphate biosynthesis; pyridoxine 5'-phosphate from D-erythrose 4-phosphate: step 1/5. Its function is as follows. Catalyzes the NAD-dependent conversion of D-erythrose 4-phosphate to 4-phosphoerythronate. The protein is D-erythrose-4-phosphate dehydrogenase of Idiomarina loihiensis (strain ATCC BAA-735 / DSM 15497 / L2-TR).